A 331-amino-acid chain; its full sequence is MRPAFAVGLVFAGCCSNVIFLELLARTHPGCGNIVTFAQFLFIAVEGFLFEANLGRKPPAIPIRYYAIMVTMFFTVSVVNNYALNLNIAMPLHMIFRSGSLIANMILGIIILKKRYSMFKYTSIALVSAGIFICTFMSAKQVTVQTGLSDKDGFQAFAWWLLGIAALTFALLMSARMGIFQETLYRQFGKHSKEALFYNHALPLPGFIFLASDIYDHVVLFNKSELYQVPVIGVTMPVMWFYLLMNVVTQYVCIRGVFILTTECTSLTVTLVVTLRKFVSLIFSILYFQNQFTMWHWLGTSFVFIGTLMYTEVWKNLGTTKSELQKDDKKD.

11 consecutive transmembrane segments (helical) span residues 4–24 (AFAVGLVFAGCCSNVIFLELL), 30–50 (GCGNIVTFAQFLFIAVEGFLF), 59–79 (PAIPIRYYAIMVTMFFTVSVV), 92–112 (LHMIFRSGSLIANMILGIIIL), 124–144 (IALVSAGIFICTFMSAKQVTV), 153–173 (GFQAFAWWLLGIAALTFALLM), 201–221 (ALPLPGFIFLASDIYDHVVLF), 229–249 (VPVIGVTMPVMWFYLLMNVVT), 251–267 (YVCIRGVFILTTECTSL), 268–288 (TVTLVVTLRKFVSLIFSILYF), and 294–314 (MWHWLGTSFVFIGTLMYTEVW). A Mediates endoplasmic reticulum retention motif is present at residues 326 to 331 (KDDKKD).

This sequence belongs to the nucleotide-sugar transporter family. SLC35B subfamily.

The protein resides in the endoplasmic reticulum membrane. It catalyses the reaction UDP-N-acetyl-alpha-D-glucosamine(in) + UDP-alpha-D-glucuronate(out) = UDP-N-acetyl-alpha-D-glucosamine(out) + UDP-alpha-D-glucuronate(in). The enzyme catalyses UDP-alpha-D-xylose(in) + UDP-alpha-D-glucuronate(out) = UDP-alpha-D-xylose(out) + UDP-alpha-D-glucuronate(in). Functionally, antiporter that transports nucleotide sugars across the endoplasmic reticulum (ER) membrane in exchange for another nucleotide sugar. May couple UDP-alpha-D-glucuronate (UDP-GlcA) or UDP-alpha-D-xylose (UDP-Xyl) efflux to UDP-alpha-D-glucuronate (UDP-GlcA) influx into the ER lumen, which in turn stimulates glucuronidation and excretion of endobiotics and xenobiotics. This is Nucleotide sugar transporter SLC35B4 (Slc35b4) from Mus musculus (Mouse).